The sequence spans 201 residues: Large ribosomal subunit protein bL25 (201 aa).

The protein belongs to the bacterial ribosomal protein bL25 family. CTC subfamily. Part of the 50S ribosomal subunit; part of the 5S rRNA/L5/L18/L25 subcomplex. Contacts the 5S rRNA. Binds to the 5S rRNA independently of L5 and L18.

Functionally, this is one of the proteins that binds to the 5S RNA in the ribosome where it forms part of the central protuberance. This chain is Large ribosomal subunit protein bL25, found in Burkholderia cenocepacia (strain HI2424).